The sequence spans 416 residues: MTEIYRTISTGRGDDVSPTKCRERRRRRIEMRRQAAVFGEPSSSRNRDRTDMEVYSSFDVPLRKQARRSEIGGLPADIGGFLAPPAASSCQKSEAPVWKGEETEDEPLYGIVSVMGRSRKMEDSVTVKPNLCKPEVNRQRPVHFFAVYDGHGGSQVSTLCSTTMHTFVKEELEQNLEEEEEGSENDVVERKWRGVMKRSFKRMDEMATSTCVCGTSVPLCNCDPREAAISGSTAVTAVLTHDHIIVANTGDSRAVLCRNGMAIPLSNDHKPDRPDERARIEAAGGRVLVVDGARVEGILATSRAIGDRYLKPMVAWEPEVTFMRRESGDECLVLASDGLWDVLSSQLACDIARFCLREETPSSLDLNRMAQEDDNDGEQNPSRSVLAATLLTRLALGRQSSDNISVVVIDLKNSSQ.

Disordered stretches follow at residues 1–20 (MTEI…SPTK) and 32–51 (RRQA…DRTD). Positions 108–411 (LYGIVSVMGR…DNISVVVIDL (304 aa)) constitute a PPM-type phosphatase domain. Residues Asp149, Gly150, Asp337, and Asp402 each contribute to the Mn(2+) site.

The protein belongs to the PP2C family. Mg(2+) serves as cofactor. The cofactor is Mn(2+).

The enzyme catalyses O-phospho-L-seryl-[protein] + H2O = L-seryl-[protein] + phosphate. It carries out the reaction O-phospho-L-threonyl-[protein] + H2O = L-threonyl-[protein] + phosphate. Functionally, negative regulator of abscisic acid (ABA) responses during seed germination. The sequence is that of Probable protein phosphatase 2C 75 (AHG1) from Arabidopsis thaliana (Mouse-ear cress).